The primary structure comprises 166 residues: MEMTNAQRLILSNQYFLMSQLDPNNANKYKRLQTIVERGYELHMRELNREFGCLPETECREIIDIMEMYHAMQESNRMLDDAARKDVDQRRLTFLGFDMATEAQLVNYVRFLVDSEGLYPQFDKGEHHFNSQMPMLAKYRRMLTTWRNCPRQYHLSGNELRQIMNA.

This sequence belongs to the UPF0304 family.

The chain is UPF0304 protein VC_1871 from Vibrio cholerae serotype O1 (strain ATCC 39315 / El Tor Inaba N16961).